Reading from the N-terminus, the 1080-residue chain is ATP-dependent helicase/deoxyribonuclease subunit B (1080 aa).

This sequence belongs to the helicase family. AddB/RexB type 2 subfamily. As to quaternary structure, heterodimer of AddA and RexB. Requires Mg(2+) as cofactor.

In terms of biological role, the heterodimer acts as both an ATP-dependent DNA helicase and an ATP-dependent, dual-direction single-stranded exonuclease. Recognizes the chi site generating a DNA molecule suitable for the initiation of homologous recombination. This subunit has 5' -&gt; 3' nuclease activity but not helicase activity. This chain is ATP-dependent helicase/deoxyribonuclease subunit B, found in Streptococcus mutans serotype c (strain ATCC 700610 / UA159).